The sequence spans 449 residues: Exopolygalacturonase X-2 (449 aa).

The first 24 residues, 1–24, serve as a signal peptide directing secretion; the sequence is MGFKRTIGLLLGILLALDQVSVLA. 3 N-linked (GlcNAc...) asparagine glycosylation sites follow: Asn-136, Asn-172, and Asn-208. A PbH1 1 repeat occupies 240–261; the sequence is SDNVVIQNSVINHDDDCVSFKP. The active-site Proton donor is the Asp-254. Cys-256 and Cys-273 are oxidised to a cystine. 2 N-linked (GlcNAc...) asparagine glycosylation sites follow: Asn-262 and Asn-274. PbH1 repeat units lie at residues 263-283 and 294-315; these read STNI…SVGS and VSDL…RLKV. His-277 is a catalytic residue. N-linked (GlcNAc...) asparagine glycosylation is found at Asn-301, Asn-306, Asn-340, and Asn-365. Residues Cys-403 and Cys-409 are joined by a disulfide bond. Asn-416 and Asn-421 each carry an N-linked (GlcNAc...) asparagine glycan.

This sequence belongs to the glycosyl hydrolase 28 family.

The protein localises to the secreted. It catalyses the reaction [(1-&gt;4)-alpha-D-galacturonosyl](n) + H2O = alpha-D-galacturonate + [(1-&gt;4)-alpha-D-galacturonosyl](n-1). In terms of biological role, specific in hydrolyzing the terminal glycosidic bond of polygalacturonic acid and oligogalacturonates. The protein is Exopolygalacturonase X-2 (pgaX-2) of Emericella nidulans (strain FGSC A4 / ATCC 38163 / CBS 112.46 / NRRL 194 / M139) (Aspergillus nidulans).